The primary structure comprises 339 residues: Glyceraldehyde-3-phosphate dehydrogenase (339 aa).

Residues 12 to 13 (RI), Asp-34, Arg-78, and Thr-120 contribute to the NAD(+) site. D-glyceraldehyde 3-phosphate contacts are provided by residues 149-151 (SCT), Thr-180, 209-210 (TG), and Arg-232. Catalysis depends on Cys-150, which acts as the Nucleophile. Asn-319 contacts NAD(+).

This sequence belongs to the glyceraldehyde-3-phosphate dehydrogenase family. Homotetramer.

The protein localises to the cytoplasm. The enzyme catalyses D-glyceraldehyde 3-phosphate + phosphate + NAD(+) = (2R)-3-phospho-glyceroyl phosphate + NADH + H(+). It participates in carbohydrate degradation; glycolysis; pyruvate from D-glyceraldehyde 3-phosphate: step 1/5. Functionally, catalyzes the oxidative phosphorylation of glyceraldehyde 3-phosphate (G3P) to 1,3-bisphosphoglycerate (BPG) using the cofactor NAD. The first reaction step involves the formation of a hemiacetal intermediate between G3P and a cysteine residue, and this hemiacetal intermediate is then oxidized to a thioester, with concomitant reduction of NAD to NADH. The reduced NADH is then exchanged with the second NAD, and the thioester is attacked by a nucleophilic inorganic phosphate to produce BPG. This chain is Glyceraldehyde-3-phosphate dehydrogenase (gapA), found in Haemophilus influenzae (strain ATCC 51907 / DSM 11121 / KW20 / Rd).